The chain runs to 526 residues: Bifunctional purine biosynthesis protein PurH (526 aa).

Residues 15 to 161 (DVVPIRRALI…KNHANVAIVV (147 aa)) enclose the MGS-like domain.

This sequence belongs to the PurH family.

The enzyme catalyses (6R)-10-formyltetrahydrofolate + 5-amino-1-(5-phospho-beta-D-ribosyl)imidazole-4-carboxamide = 5-formamido-1-(5-phospho-D-ribosyl)imidazole-4-carboxamide + (6S)-5,6,7,8-tetrahydrofolate. The catalysed reaction is IMP + H2O = 5-formamido-1-(5-phospho-D-ribosyl)imidazole-4-carboxamide. The protein operates within purine metabolism; IMP biosynthesis via de novo pathway; 5-formamido-1-(5-phospho-D-ribosyl)imidazole-4-carboxamide from 5-amino-1-(5-phospho-D-ribosyl)imidazole-4-carboxamide (10-formyl THF route): step 1/1. Its pathway is purine metabolism; IMP biosynthesis via de novo pathway; IMP from 5-formamido-1-(5-phospho-D-ribosyl)imidazole-4-carboxamide: step 1/1. This is Bifunctional purine biosynthesis protein PurH from Leifsonia xyli subsp. xyli (strain CTCB07).